A 385-amino-acid polypeptide reads, in one-letter code: 1-deoxy-D-xylulose 5-phosphate reductoisomerase (385 aa).

Residues threonine 10, glycine 11, serine 12, isoleucine 13, glycine 36, asparagine 38, and asparagine 121 each coordinate NADPH. Residue lysine 122 participates in 1-deoxy-D-xylulose 5-phosphate binding. An NADPH-binding site is contributed by glutamate 123. Mn(2+) is bound at residue aspartate 147. Serine 148, glutamate 149, serine 173, and histidine 196 together coordinate 1-deoxy-D-xylulose 5-phosphate. Residue glutamate 149 participates in Mn(2+) binding. Glycine 202 is a binding site for NADPH. 1-deoxy-D-xylulose 5-phosphate-binding residues include serine 209, asparagine 214, lysine 215, and glutamate 218. Glutamate 218 contacts Mn(2+).

It belongs to the DXR family. The cofactor is Mg(2+). Mn(2+) serves as cofactor.

The enzyme catalyses 2-C-methyl-D-erythritol 4-phosphate + NADP(+) = 1-deoxy-D-xylulose 5-phosphate + NADPH + H(+). It participates in isoprenoid biosynthesis; isopentenyl diphosphate biosynthesis via DXP pathway; isopentenyl diphosphate from 1-deoxy-D-xylulose 5-phosphate: step 1/6. Catalyzes the NADPH-dependent rearrangement and reduction of 1-deoxy-D-xylulose-5-phosphate (DXP) to 2-C-methyl-D-erythritol 4-phosphate (MEP). The sequence is that of 1-deoxy-D-xylulose 5-phosphate reductoisomerase from Exiguobacterium sp. (strain ATCC BAA-1283 / AT1b).